A 297-amino-acid chain; its full sequence is tRNA (guanine-N(7)-)-methyltransferase (297 aa).

The S-adenosyl-L-methionine site is built by Glu-22, Glu-47, Asp-74, and Asp-97. The active site involves Asp-97. Residues Lys-101, Asp-133, and 165–168 each bind substrate; that span reads TKYE.

This sequence belongs to the class I-like SAM-binding methyltransferase superfamily. TrmB family.

The enzyme catalyses guanosine(46) in tRNA + S-adenosyl-L-methionine = N(7)-methylguanosine(46) in tRNA + S-adenosyl-L-homocysteine. The protein operates within tRNA modification; N(7)-methylguanine-tRNA biosynthesis. In terms of biological role, catalyzes the formation of N(7)-methylguanine at position 46 (m7G46) in tRNA. This chain is tRNA (guanine-N(7)-)-methyltransferase, found in Aquifex aeolicus (strain VF5).